A 385-amino-acid chain; its full sequence is MPHQLFTSESVSEGHPDKIADQISDAVLDAILIQDPKARVACETYVKTGMVIVGGEITTSAWVDIEEITRCTLAEIGYVHSDMGFDAHSCAVLSAIGKQSPDINQGVDRIDPLDQGAGDQGMMFGYATNETDVLMPAPITYSHRLVKRQSEMRKIGQLPWLRPDAKSQITFKYDKGYAVAIDTIVFSTQHEEDVTQKQLEEAVMEEIIKPVIPTQWLSSSTKYFINPTGRFVIGGPMGDCGLTGRKIIVDTYGGMARHGGGAFSGKDPSKVDRSAAYAARYVAKNIVAAGLADRCEIQISYAIGVANPTSIMLETFGTEKITIQKIMSLIHQHFDLRPYGLIKMLDLLKPIYRATAAYGHFGRDVFPWEATDKAELLREQAGLNQ.

Position 15 (histidine 15) interacts with ATP. Aspartate 17 is a Mg(2+) binding site. A K(+)-binding site is contributed by glutamate 43. The L-methionine site is built by glutamate 56 and glutamine 99. Residues 99–109 (QSPDINQGVDR) are flexible loop. Residues 164-166 (DAK), 230-231 (RF), aspartate 239, 245-246 (RK), alanine 262, and lysine 266 contribute to the ATP site. Aspartate 239 contacts L-methionine. Lysine 270 provides a ligand contact to L-methionine.

It belongs to the AdoMet synthase family. As to quaternary structure, homotetramer; dimer of dimers. It depends on Mg(2+) as a cofactor. K(+) serves as cofactor.

The protein localises to the cytoplasm. It carries out the reaction L-methionine + ATP + H2O = S-adenosyl-L-methionine + phosphate + diphosphate. The protein operates within amino-acid biosynthesis; S-adenosyl-L-methionine biosynthesis; S-adenosyl-L-methionine from L-methionine: step 1/1. Functionally, catalyzes the formation of S-adenosylmethionine (AdoMet) from methionine and ATP. The overall synthetic reaction is composed of two sequential steps, AdoMet formation and the subsequent tripolyphosphate hydrolysis which occurs prior to release of AdoMet from the enzyme. This Hamiltonella defensa subsp. Acyrthosiphon pisum (strain 5AT) protein is S-adenosylmethionine synthase.